The sequence spans 280 residues: Para-Rep C2 (280 aa).

The region spanning 1-97 is the CRESS-DNA virus Rep endonuclease domain; the sequence is MARRYCFTLN…ETLISEIGIP (97 aa). Positions 6–9 match the RCR-1 motif; sequence CFTL. 2 residues coordinate a divalent metal cation: glutamate 37 and histidine 45. Positions 45 to 47 match the RCR-2 motif; it reads HLQ. A Nuclear localization signal motif is present at residues 54–75; that stretch reads NKIRLGGLKKKFGNRAHWEIAR. Catalysis depends on tyrosine 84, which acts as the For DNA cleavage activity. An RCR-3 motif is present at residues 84-87; it reads YCCK. A Nuclear localization signal motif is present at residues 97–103; it reads PVMKGSN. ATP is bound at residue 172–180; sequence GSDGGEGKT.

Belongs to the nanoviridea/circoviridae replication-associated protein family. Homooligomer (Potential). Rep binds to repeated DNA motifs (iterons). Requires Mg(2+) as cofactor. It depends on Mn(2+) as a cofactor.

The protein localises to the host nucleus. It carries out the reaction ATP + H2O = ADP + phosphate + H(+). In terms of biological role, initiates and terminates the replication only of its own subviral DNA molecule. The closed circular ssDNA genome is first converted to a superhelical dsDNA. Rep binds a specific hairpin at the genome origin of replication. Introduces an endonucleolytic nick within the intergenic region of the genome, thereby initiating the rolling circle replication (RCR). Following cleavage, binds covalently to the 5'-phosphate of DNA as a tyrosyl ester. The cleavage gives rise to a free 3'-OH that serves as a primer for the cellular DNA polymerase. The polymerase synthesizes the (+) strand DNA by rolling circle mechanism. After one round of replication, a Rep-catalyzed nucleotidyl transfer reaction releases a circular single-stranded virus genome, thereby terminating the replication. Displays origin-specific DNA cleavage, nucleotidyl transferase, ATPase and helicase activities. The sequence is that of Para-Rep C2 (C2) from Subterranean clover stunt C2 alphasatellite (SCSC2A).